Consider the following 399-residue polypeptide: Elongation factor Tu (399 aa).

In terms of domain architecture, tr-type G spans 10 to 204; that stretch reads KPHVNIGTIG…AVDANIPEPV (195 aa). The interval 19-26 is G1; sequence GHVDHGKT. 19–26 is a binding site for GTP; it reads GHVDHGKT. Thr-26 contacts Mg(2+). Positions 60–64 are G2; sequence GITIN. The tract at residues 81–84 is G3; that stretch reads DCPG. Residues 81–85 and 136–139 each bind GTP; these read DCPGH and NKCD. The G4 stretch occupies residues 136–139; it reads NKCD. Residues 174–176 are G5; that stretch reads SGL.

The protein belongs to the TRAFAC class translation factor GTPase superfamily. Classic translation factor GTPase family. EF-Tu/EF-1A subfamily. Monomer.

The protein localises to the cytoplasm. The enzyme catalyses GTP + H2O = GDP + phosphate + H(+). Functionally, GTP hydrolase that promotes the GTP-dependent binding of aminoacyl-tRNA to the A-site of ribosomes during protein biosynthesis. The protein is Elongation factor Tu of Synechococcus sp. (strain RCC307).